We begin with the raw amino-acid sequence, 336 residues long: Glycerol-3-phosphate dehydrogenase [NAD(P)+] (336 aa).

Residues Trp-16 and Lys-109 each coordinate NADPH. Sn-glycerol 3-phosphate-binding residues include Lys-109, Gly-137, and Ser-139. Position 141 (Ala-141) interacts with NADPH. Lys-192, Asp-245, Ser-255, Arg-256, and Asn-257 together coordinate sn-glycerol 3-phosphate. The Proton acceptor role is filled by Lys-192. Arg-256 is a binding site for NADPH. NADPH contacts are provided by Val-280 and Glu-282.

This sequence belongs to the NAD-dependent glycerol-3-phosphate dehydrogenase family.

The protein resides in the cytoplasm. It carries out the reaction sn-glycerol 3-phosphate + NAD(+) = dihydroxyacetone phosphate + NADH + H(+). The enzyme catalyses sn-glycerol 3-phosphate + NADP(+) = dihydroxyacetone phosphate + NADPH + H(+). It participates in membrane lipid metabolism; glycerophospholipid metabolism. Catalyzes the reduction of the glycolytic intermediate dihydroxyacetone phosphate (DHAP) to sn-glycerol 3-phosphate (G3P), the key precursor for phospholipid synthesis. In Hyphomonas neptunium (strain ATCC 15444), this protein is Glycerol-3-phosphate dehydrogenase [NAD(P)+].